Consider the following 196-residue polypeptide: Probable GTP-binding protein EngB (196 aa).

One can recognise an EngB-type G domain in the interval 24-196; sequence ELSEVALSGR…IWNLIEPYIS (173 aa). Residues 32–39, 59–63, 77–80, 144–147, and 176–178 each bind GTP; these read GRSNVGKS, GKTQT, DVPG, TKED, and YSS. Residues S39 and T61 each contribute to the Mg(2+) site.

Belongs to the TRAFAC class TrmE-Era-EngA-EngB-Septin-like GTPase superfamily. EngB GTPase family. It depends on Mg(2+) as a cofactor.

In terms of biological role, necessary for normal cell division and for the maintenance of normal septation. The polypeptide is Probable GTP-binding protein EngB (Staphylococcus aureus (strain Mu3 / ATCC 700698)).